The chain runs to 340 residues: Nitrilase (340 aa).

A CN hydrolase domain is found at 7 to 273; sequence IRAAAVQIAP…EGMVVADLDM (267 aa). Catalysis depends on E47, which acts as the Proton acceptor. Residue K129 is part of the active site. C163 acts as the Nucleophile in catalysis.

This sequence belongs to the carbon-nitrogen hydrolase superfamily. Nitrilase family. Forms oligomers.

It catalyses the reaction a nitrile + 2 H2O = a carboxylate + NH4(+). The catalysed reaction is phenylpropanonitrile + 2 H2O = 3-phenylpropanoate + NH4(+). It carries out the reaction an aliphatic nitrile + 2 H2O = a carboxylate + NH4(+). Highly resistant to various miscible cosolvents and tolerates high substrate concentrations. Its function is as follows. Catalyzes the hydrolysis of a broad range of nitriles to yield their corresponding carboxylic acid and ammonia. In vitro, shows high activity toward benzylic/unsaturated nitriles. The preferred substrate is trans-cinnamonitrile, followed by mono/di-cyanopyridines and aromatic substituted nitriles, with a moderate activity toward 3-phenylpropionitrile. Shows weaker activity toward the common dinitrile fumaronitrile. Also shows weak activity toward some aliphatic nitriles, including adiponitrile and glutaronitrile, and the arylacetonitrile 2-thiopheneacetonitrile. The polypeptide is Nitrilase (Paraburkholderia phymatum (strain DSM 17167 / CIP 108236 / LMG 21445 / STM815) (Burkholderia phymatum)).